The chain runs to 206 residues: Large ribosomal subunit protein uL4 (206 aa).

Positions 43–78 are disordered; sequence ARSGNRAQKDREQVKHTTKKPWRQKGTGRARAGMSS. Residues 58–70 are compositionally biased toward basic residues; sequence HTTKKPWRQKGTG.

It belongs to the universal ribosomal protein uL4 family. As to quaternary structure, part of the 50S ribosomal subunit.

In terms of biological role, one of the primary rRNA binding proteins, this protein initially binds near the 5'-end of the 23S rRNA. It is important during the early stages of 50S assembly. It makes multiple contacts with different domains of the 23S rRNA in the assembled 50S subunit and ribosome. Its function is as follows. Forms part of the polypeptide exit tunnel. The polypeptide is Large ribosomal subunit protein uL4 (Polynucleobacter necessarius subsp. necessarius (strain STIR1)).